The sequence spans 382 residues: Nitric oxide reductase FlRd-NAD(+) reductase (382 aa).

It belongs to the FAD-dependent oxidoreductase family. FAD serves as cofactor.

The protein resides in the cytoplasm. It catalyses the reaction 2 reduced [nitric oxide reductase rubredoxin domain] + NAD(+) + H(+) = 2 oxidized [nitric oxide reductase rubredoxin domain] + NADH. The protein operates within nitrogen metabolism; nitric oxide reduction. Functionally, one of at least two accessory proteins for anaerobic nitric oxide (NO) reductase. Reduces the rubredoxin moiety of NO reductase. This is Nitric oxide reductase FlRd-NAD(+) reductase from Vibrio vulnificus (strain CMCP6).